Reading from the N-terminus, the 112-residue chain is MSQADISTCSAPQRVFQEAVKKGNTKELHSLLQNMTNCEFNVNSFGPEGQTALHQSVIDGNLELVKLLVKFGADIRLANREGWSALHIAAFGGHQDIVLYLITKAKYSSGAR.

ANK repeat units lie at residues 48 to 77 and 81 to 110; these read EGQT…DIRL and EGWS…YSSG.

The protein belongs to the NRARP family.

In terms of biological role, regulates independently canonical Wnt and Notch signaling by modulating LEF1 and Notch protein turnover. Stabilizes LEF1, a pivotal transcription factor in the Wnt signaling cascade, by blocking its ubiquitination. Involved in angiogenesis; involved in intersegmental vessel patterning during development. The polypeptide is Notch-regulated ankyrin repeat-containing protein A (nrarpa) (Danio rerio (Zebrafish)).